Consider the following 548-residue polypeptide: Sulochrin halogenase gedL (548 aa).

Residues Gly14, Ala17, and Glu47 each coordinate FAD. The chloride site is built by Ser333 and Gly334. Val335 contacts FAD.

It belongs to the flavin-dependent halogenase family.

The enzyme catalyses sulochrin + 2 FADH2 + 2 chloride + 2 O2 = dihydrogeodin + 2 FAD + 4 H2O + H(+). The protein operates within secondary metabolite biosynthesis. Sulochrin halogenase; part of the gene cluster that mediates the biosynthesis of geodin, an intermediate in the biosynthesis of other natural products. The pathway begins with the synthesis of atrochrysone thioester by the polyketide synthase (PKS) gedC. The atrochrysone carboxyl ACP thioesterase gedB then breaks the thioester bond and releases the atrochrysone carboxylic acid from gedC. The atrochrysone carboxylic acid is then converted to atrochrysone which is further transformed into emodinanthrone. The next step is performed by the emodinanthrone oxygenase gedH that catalyzes the oxidation of emodinanthrone to emodin. Emodin O-methyltransferase encoded probably by gedA then catalyzes methylation of the 8-hydroxy group of emodin to form questin. Ring cleavage of questin by questin oxidase gedK leads to desmethylsulochrin via several intermediates including questin epoxide. Another methylation step probably catalyzed by methyltransferase gedG leads to the formation of sulochrin which is further converted to dihydrogeodin by the sulochrin halogenase gedL. Finally, the dihydrogeodin oxidase gedJ catalyzes the stereospecific phenol oxidative coupling reaction converting dihydrogeodin to geodin. The protein is Sulochrin halogenase gedL of Aspergillus terreus (strain NIH 2624 / FGSC A1156).